The primary structure comprises 97 residues: Probable lipopolysaccharide assembly protein A (97 aa).

The next 2 helical transmembrane spans lie at Met-1–Ile-21 and Val-46–Ile-66. Residues Lys-67–Lys-95 adopt a coiled-coil conformation.

Belongs to the LapA family.

The protein localises to the cell inner membrane. Its function is as follows. Involved in the assembly of lipopolysaccharide (LPS). This is Probable lipopolysaccharide assembly protein A from Haemophilus influenzae (strain ATCC 51907 / DSM 11121 / KW20 / Rd).